Consider the following 689-residue polypeptide: 1,4-alpha-glucan-branching enzyme (689 aa).

Residues Trp-93 and Lys-128 each coordinate (1,4-alpha-D-glucosyl)n. Catalysis depends on Asp-345, which acts as the Nucleophile. Glu-400 serves as the catalytic Proton donor.

Belongs to the glycosyl hydrolase 13 family. GlgB subfamily.

It is found in the cytoplasm. It catalyses the reaction Transfers a segment of a (1-&gt;4)-alpha-D-glucan chain to a primary hydroxy group in a similar glucan chain.. Its pathway is glycan biosynthesis; glycogen biosynthesis. Its function is as follows. Glycogen-branching enzyme participates in the glycogen biosynthetic process along with glycogenin and glycogen synthase. Generates alpha-1,6-glucosidic branches from alpha-1,4-linked glucose chains, to increase solubility of the glycogen polymer. The chain is 1,4-alpha-glucan-branching enzyme (gbeA) from Aspergillus oryzae (strain ATCC 42149 / RIB 40) (Yellow koji mold).